Here is a 366-residue protein sequence, read N- to C-terminus: MTPEHLPTEQYDAQLAEKVVRLQSMMTPFAAPVPEVFRSPVSHYRMRAEFRIWHDGDDLYHIIFDQQTKSRIRVNSFPAASELINQLMTLMIEGVRNNPQLRHKLFQIDYLTTQSNQAIVSMLYHKKLGDEWRKEAEVLRDALRAQNINVHLIGRATKTKIMLDQDYVDERLPVAGKEMIYRQVENSFTQPNAAMNVQMLEWALSATEGSKGDLLELYCGNGNFSLALARNFERVLATEIAKPSVASAQYNIAANHIDNVQIIRMAAEEFTQAMNGEREFNRLQGIDLKSYQCETIFVDPPRSGLDSETEKMVQAYPRILYISCNPETLCKNLETLSQTHKVERLALFDQFPYTHHMECGVLLTLK.

Positions 190, 218, 223, 239, and 299 each coordinate S-adenosyl-L-methionine. The active-site Nucleophile is cysteine 324. Glutamate 358 (proton acceptor) is an active-site residue.

This sequence belongs to the class I-like SAM-binding methyltransferase superfamily. RNA M5U methyltransferase family. TrmA subfamily.

The catalysed reaction is uridine(54) in tRNA + S-adenosyl-L-methionine = 5-methyluridine(54) in tRNA + S-adenosyl-L-homocysteine + H(+). It carries out the reaction uridine(341) in tmRNA + S-adenosyl-L-methionine = 5-methyluridine(341) in tmRNA + S-adenosyl-L-homocysteine + H(+). Its function is as follows. Dual-specificity methyltransferase that catalyzes the formation of 5-methyluridine at position 54 (m5U54) in all tRNAs, and that of position 341 (m5U341) in tmRNA (transfer-mRNA). This chain is tRNA/tmRNA (uracil-C(5))-methyltransferase, found in Enterobacter sp. (strain 638).